An 81-amino-acid chain; its full sequence is Teretoxin Tsu6.8 (81 aa).

A signal peptide spans 1–21; that stretch reads MATSGRLLCLCLVLGLIFESL. Residues 22 to 45 constitute a propeptide that is removed on maturation; the sequence is GHPVMGEKRAGENASPSARSLPKR.

Belongs to the teretoxin M (TM) superfamily. Post-translationally, contains 3 disulfide bonds. As to expression, expressed by the venom duct.

Its subcellular location is the secreted. The chain is Teretoxin Tsu6.8 from Terebra subulata (Chocolate spotted auger).